The sequence spans 176 residues: Disulfide bond formation protein B (176 aa).

At 1 to 14 (MLRFLNQCSHGRGA) the chain is on the cytoplasmic side. The chain crosses the membrane as a helical span at residues 15 to 31 (WLLMAFTALALELTALW). The Periplasmic portion of the chain corresponds to 32–49 (FQHVMLLKPCVLCIYERC). A disulfide bridge links Cys-41 with Cys-44. Residues 50–65 (ALFGVLGAALIGAIAP) form a helical membrane-spanning segment. Residues 66–71 (KTPLRY) lie on the Cytoplasmic side of the membrane. A helical transmembrane segment spans residues 72 to 89 (VAMVIWLYSAFRGVQLTY). The Periplasmic portion of the chain corresponds to 90-144 (EHTMLQLYPSPFATCDFMARFPEWLPLDKWVPQVFVASGDCAERQWEFLGLEMPQ). The cysteines at positions 104 and 130 are disulfide-linked. The chain crosses the membrane as a helical span at residues 145 to 163 (WLLGIFIAYLIVAVLVVIS). Residues 164–176 (QPFKAKKRDLFGR) lie on the Cytoplasmic side of the membrane.

Belongs to the DsbB family.

Its subcellular location is the cell inner membrane. Its function is as follows. Required for disulfide bond formation in some periplasmic proteins. Acts by oxidizing the DsbA protein. The sequence is that of Disulfide bond formation protein B from Escherichia coli O6:K15:H31 (strain 536 / UPEC).